The primary structure comprises 529 residues: Bifunctional purine biosynthesis protein PurH (529 aa).

One can recognise an MGS-like domain in the interval 1-148 (MQQRRPVRRA…KNHKDVAIVV (148 aa)). Residue Lys-287 is modified to N6-acetyllysine.

This sequence belongs to the PurH family.

The enzyme catalyses (6R)-10-formyltetrahydrofolate + 5-amino-1-(5-phospho-beta-D-ribosyl)imidazole-4-carboxamide = 5-formamido-1-(5-phospho-D-ribosyl)imidazole-4-carboxamide + (6S)-5,6,7,8-tetrahydrofolate. The catalysed reaction is IMP + H2O = 5-formamido-1-(5-phospho-D-ribosyl)imidazole-4-carboxamide. Its pathway is purine metabolism; IMP biosynthesis via de novo pathway; 5-formamido-1-(5-phospho-D-ribosyl)imidazole-4-carboxamide from 5-amino-1-(5-phospho-D-ribosyl)imidazole-4-carboxamide (10-formyl THF route): step 1/1. The protein operates within purine metabolism; IMP biosynthesis via de novo pathway; IMP from 5-formamido-1-(5-phospho-D-ribosyl)imidazole-4-carboxamide: step 1/1. In Shigella dysenteriae serotype 1 (strain Sd197), this protein is Bifunctional purine biosynthesis protein PurH.